We begin with the raw amino-acid sequence, 338 residues long: Arginase, mitochondrial (338 aa).

Residues 1-15 (MSTIARRGFHYMQRL) constitute a mitochondrion transit peptide. Residues serine 73 and 92–95 (DSTN) contribute to the L-ornithine site. 4 residues coordinate Mn(2+): histidine 157, aspartate 181, histidine 183, and aspartate 185. 185 to 187 (DLY) provides a ligand contact to L-ornithine. 191 to 193 (EGN) contributes to the substrate binding site. Residue serine 220 participates in L-ornithine binding. Residues aspartate 266 and aspartate 268 each coordinate Mn(2+). Substrate is bound at residue glutamate 309.

It belongs to the arginase family. In terms of assembly, forms homohexamers. It depends on Mn(2+) as a cofactor.

It localises to the mitochondrion. The enzyme catalyses L-arginine + H2O = urea + L-ornithine. It carries out the reaction agmatine + H2O = urea + putrescine. The protein operates within nitrogen metabolism; urea cycle; L-ornithine and urea from L-arginine: step 1/1. It participates in amine and polyamine biosynthesis; putrescine biosynthesis via agmatine pathway; putrescine from agmatine: step 1/1. Functionally, catalyzes the hydrolysis of L-arginine to urea and L-ornithine. The latter can be utilized in the urea cycle or as a precursor for the synthesis of both polyamines and proline. Possesses agmatinase activity. Catalyzes the formation of putrescine from agmatine. The sequence is that of Arginase, mitochondrial from Medicago truncatula (Barrel medic).